A 228-amino-acid chain; its full sequence is 5'-methylthioadenosine/S-adenosylhomocysteine nucleosidase (228 aa).

E11 acts as the Proton acceptor in catalysis. Residues G77, I151, and 172–173 (ME) contribute to the substrate site. D196 functions as the Proton donor in the catalytic mechanism.

The protein belongs to the PNP/UDP phosphorylase family. MtnN subfamily.

The catalysed reaction is S-adenosyl-L-homocysteine + H2O = S-(5-deoxy-D-ribos-5-yl)-L-homocysteine + adenine. It catalyses the reaction S-methyl-5'-thioadenosine + H2O = 5-(methylsulfanyl)-D-ribose + adenine. It carries out the reaction 5'-deoxyadenosine + H2O = 5-deoxy-D-ribose + adenine. It functions in the pathway amino-acid biosynthesis; L-methionine biosynthesis via salvage pathway; S-methyl-5-thio-alpha-D-ribose 1-phosphate from S-methyl-5'-thioadenosine (hydrolase route): step 1/2. Catalyzes the irreversible cleavage of the glycosidic bond in both 5'-methylthioadenosine (MTA) and S-adenosylhomocysteine (SAH/AdoHcy) to adenine and the corresponding thioribose, 5'-methylthioribose and S-ribosylhomocysteine, respectively. Also cleaves 5'-deoxyadenosine, a toxic by-product of radical S-adenosylmethionine (SAM) enzymes, into 5-deoxyribose and adenine. The polypeptide is 5'-methylthioadenosine/S-adenosylhomocysteine nucleosidase (Staphylococcus aureus (strain MRSA252)).